We begin with the raw amino-acid sequence, 281 residues long: Hexaprenyl pyrophosphate synthase (281 aa).

Residues Lys-42, Arg-45, and His-74 each contribute to the isopentenyl diphosphate site. Residues Asp-81 and Asp-85 each coordinate Mg(2+). Residue Arg-91 coordinates isopentenyl diphosphate.

The protein belongs to the FPP/GGPP synthase family. In terms of assembly, homodimer. Mg(2+) is required as a cofactor.

It carries out the reaction 2 isopentenyl diphosphate + (2E,6E,10E)-geranylgeranyl diphosphate = all-trans-hexaprenyl diphosphate + 2 diphosphate. Its function is as follows. Catalyzes consecutive E-type condensation of two isopentenyl pyrophosphate (IPP) molecules with an allylic substrate such as geranylgeranyl diphosphate (GGPP), farnesyl diphosphate (FPP) or geranyl diphosphate (GPP) to yield the medium-chain product trans-C30-hexaprenyl pyrophosphate (HexPP). GGPP is the physiological substrate. The polypeptide is Hexaprenyl pyrophosphate synthase (gdS-2) (Saccharolobus solfataricus (strain ATCC 35092 / DSM 1617 / JCM 11322 / P2) (Sulfolobus solfataricus)).